Reading from the N-terminus, the 224-residue chain is Golgi to ER traffic protein 1 (224 aa).

Over M1–L33 the chain is Lumenal. A helical membrane pass occupies residues L34–P53. The Cytoplasmic segment spans residues A54–I137. The stretch at A102 to A124 forms a coiled coil. Residues F138–F158 traverse the membrane as a helical segment. Residues W159–S182 lie on the Lumenal side of the membrane. Residues V183–I199 traverse the membrane as a helical segment. Residues V200–A224 are Cytoplasmic-facing.

This sequence belongs to the WRB/GET1 family. As to quaternary structure, component of the Golgi to ER traffic (GET) complex, which is composed of GET1, GET2 and GET3. Within the complex, GET1 and GET2 form a heterotetramer which is stabilized by phosphatidylinositol binding and which binds to the GET3 homodimer.

Its subcellular location is the endoplasmic reticulum membrane. It localises to the golgi apparatus membrane. Its function is as follows. Required for the post-translational delivery of tail-anchored (TA) proteins to the endoplasmic reticulum. Together with GET2, acts as a membrane receptor for soluble GET3, which recognizes and selectively binds the transmembrane domain of TA proteins in the cytosol. The GET complex cooperates with the HDEL receptor ERD2 to mediate the ATP-dependent retrieval of resident ER proteins that contain a C-terminal H-D-E-L retention signal from the Golgi to the ER. The sequence is that of Golgi to ER traffic protein 1 from Yarrowia lipolytica (strain CLIB 122 / E 150) (Yeast).